Reading from the N-terminus, the 318-residue chain is Pyrimidine-specific ribonucleoside hydrolase RihA (318 aa).

The active site involves His240.

This sequence belongs to the IUNH family. RihA subfamily.

Functionally, hydrolyzes cytidine or uridine to ribose and cytosine or uracil, respectively. This Shewanella sp. (strain MR-7) protein is Pyrimidine-specific ribonucleoside hydrolase RihA.